Here is an 86-residue protein sequence, read N- to C-terminus: Small ribosomal subunit protein uS17 (86 aa).

This sequence belongs to the universal ribosomal protein uS17 family. In terms of assembly, part of the 30S ribosomal subunit.

Its function is as follows. One of the primary rRNA binding proteins, it binds specifically to the 5'-end of 16S ribosomal RNA. The sequence is that of Small ribosomal subunit protein uS17 from Lactococcus lactis subsp. cremoris (strain SK11).